Reading from the N-terminus, the 401-residue chain is Subtilisin-like protease 7 (401 aa).

The N-terminal stretch at 1–20 (MGFITKAIPLALAAASVING) is a signal peptide. The propeptide occupies 21–119 (AEILETRAGV…IERDARVQIN (99 aa)). Residues 36 to 118 (KYIVVMNDGM…YIERDARVQI (83 aa)) enclose the Inhibitor I9 domain. Asparagine 58 carries N-linked (GlcNAc...) asparagine glycosylation. In terms of domain architecture, Peptidase S8 spans 129-401 (SWGLARVGSR…SKLINNGSGM (273 aa)). Residues aspartate 161 and histidine 193 each act as charge relay system in the active site. N-linked (GlcNAc...) asparagine glycosylation is found at asparagine 223 and asparagine 253. Residue serine 347 is the Charge relay system of the active site. N-linked (GlcNAc...) asparagine glycosylation occurs at asparagine 397.

The protein belongs to the peptidase S8 family.

Its subcellular location is the secreted. In terms of biological role, secreted subtilisin-like serine protease with keratinolytic activity that contributes to pathogenicity. The chain is Subtilisin-like protease 7 (SUB7) from Trichophyton equinum (Horse ringworm fungus).